The following is a 420-amino-acid chain: Uteroferrin-associated basic protein 2 (420 aa).

The signal sequence occupies residues 1-25 (MSHGKMPLVLSLVLILCGLFNSISC). Residues asparagine 225, asparagine 271, and asparagine 343 are each glycosylated (N-linked (GlcNAc...) asparagine).

The protein belongs to the serpin family. UTMP subfamily.

It localises to the secreted. The protein resides in the extracellular space. This Sus scrofa (Pig) protein is Uteroferrin-associated basic protein 2.